The following is a 556-amino-acid chain: Dihydroxy-acid dehydratase (556 aa).

Mg(2+) is bound at residue Asp-78. [2Fe-2S] cluster is bound at residue Cys-119. Mg(2+)-binding residues include Asp-120 and Lys-121. Position 121 is an N6-carboxylysine (Lys-121). Cys-195 is a [2Fe-2S] cluster binding site. Glu-446 is a binding site for Mg(2+). The active-site Proton acceptor is Ser-472.

It belongs to the IlvD/Edd family. Homodimer. The cofactor is [2Fe-2S] cluster. Requires Mg(2+) as cofactor.

The enzyme catalyses (2R)-2,3-dihydroxy-3-methylbutanoate = 3-methyl-2-oxobutanoate + H2O. It carries out the reaction (2R,3R)-2,3-dihydroxy-3-methylpentanoate = (S)-3-methyl-2-oxopentanoate + H2O. Its pathway is amino-acid biosynthesis; L-isoleucine biosynthesis; L-isoleucine from 2-oxobutanoate: step 3/4. It participates in amino-acid biosynthesis; L-valine biosynthesis; L-valine from pyruvate: step 3/4. Functionally, functions in the biosynthesis of branched-chain amino acids. Catalyzes the dehydration of (2R,3R)-2,3-dihydroxy-3-methylpentanoate (2,3-dihydroxy-3-methylvalerate) into 2-oxo-3-methylpentanoate (2-oxo-3-methylvalerate) and of (2R)-2,3-dihydroxy-3-methylbutanoate (2,3-dihydroxyisovalerate) into 2-oxo-3-methylbutanoate (2-oxoisovalerate), the penultimate precursor to L-isoleucine and L-valine, respectively. This is Dihydroxy-acid dehydratase from Desulfatibacillum aliphaticivorans.